The chain runs to 318 residues: Cytochrome f (318 aa).

An N-terminal signal peptide occupies residues 1-34 (MQNRNFFEYPKNWIILLIPIFTTFNLLFTSDCYA). Heme-binding residues include Phe-35, Cys-55, Cys-58, and His-59. Residues 284–303 (LQGLLVFLFLVVLAQVFLVL) traverse the membrane as a helical segment.

This sequence belongs to the cytochrome f family. In terms of assembly, the 4 large subunits of the cytochrome b6-f complex are cytochrome b6, subunit IV (17 kDa polypeptide, petD), cytochrome f and the Rieske protein, while the 4 small subunits are PetG, PetL, PetM and PetN. The complex functions as a dimer. Requires heme as cofactor.

The protein localises to the plastid. Its subcellular location is the chloroplast thylakoid membrane. Its function is as follows. Component of the cytochrome b6-f complex, which mediates electron transfer between photosystem II (PSII) and photosystem I (PSI), cyclic electron flow around PSI, and state transitions. The chain is Cytochrome f from Chaetosphaeridium globosum (Charophycean green alga).